Consider the following 329-residue polypeptide: T-cell acute lymphocytic leukemia protein 1 homolog (329 aa).

Disordered stretches follow at residues 1–28 (MTER…RMAP), 40–78 (ETSR…KGRD), and 91–125 (TELC…SPPA). At serine 12 the chain carries Phosphoserine. Over residues 58–70 (SGAGGGPASGGGA) the composition is skewed to gly residues. The span at 96 to 106 (PPGPAPAPAPA) shows a compositional bias: pro residues. At serine 122 the chain carries Phosphoserine; by MAPK. A Phosphoserine modification is found at serine 172. In terms of domain architecture, bHLH spans 187-239 (VRRIFTNSRERWRQQNVNGAFAELRKLIPTHPPDKKLSKNEILRLAMKYINFL). The disordered stretch occupies residues 247-329 (EEEGTQRAKP…LPAADGAGPR (83 aa)). Gly residues predominate over residues 263–273 (GAGGGGAGGGI). The span at 317 to 329 (PALLPAADGAGPR) shows a compositional bias: low complexity.

As to quaternary structure, efficient DNA binding requires dimerization with another bHLH protein. Forms heterodimers with TCF3. Binds to the LIM domain containing protein LMO2 and to DRG1. Can assemble in a complex with LDB1 and LMO2. Component of a TAL-1 complex composed at least of CBFA2T3, LDB1, TAL1 and TCF3. Interacts with SBNO2; this interaction inhibits TAL1 occupancy of the DCSTAMP promoter, leading to the activation of the DCSTAMP promoter by the transcription factor MITF. Phosphorylated on serine residues. Phosphorylation of Ser-122 by MAPK is strongly stimulated by hypoxia. Post-translationally, ubiquitinated; subsequent to hypoxia-dependent phosphorylation of Ser-122, ubiquitination targets the protein for rapid degradation via the ubiquitin system. This process may be characteristic for microvascular endothelial cells, since it could not be observed in large vessel endothelial cells. Erythroid and myeloid cells.

It localises to the nucleus. Implicated in the genesis of hemopoietic malignancies. It may play an important role in hemopoietic differentiation. Serves as a positive regulator of erythroid differentiation. This is T-cell acute lymphocytic leukemia protein 1 homolog (Tal1) from Mus musculus (Mouse).